Reading from the N-terminus, the 248-residue chain is ATP synthase subunit a, chloroplastic (248 aa).

Helical transmembrane passes span 38–58 (QVLI…AIAV), 96–116 (VPFI…GALL), 135–155 (INTT…AGLT), 200–220 (LVVV…VMFL), and 221–241 (GLFT…AYIG).

The protein belongs to the ATPase A chain family. In terms of assembly, F-type ATPases have 2 components, CF(1) - the catalytic core - and CF(0) - the membrane proton channel. CF(1) has five subunits: alpha(3), beta(3), gamma(1), delta(1), epsilon(1). CF(0) has four main subunits: a, b, b' and c.

The protein localises to the plastid. It localises to the chloroplast thylakoid membrane. In terms of biological role, key component of the proton channel; it plays a direct role in the translocation of protons across the membrane. The protein is ATP synthase subunit a, chloroplastic of Nymphaea alba (White water-lily).